The primary structure comprises 199 residues: Recombination protein RecR (199 aa).

A C4-type zinc finger spans residues 57–72; sequence CPICGNITEKEVCDIC. Positions 80–176 constitute a Toprim domain; the sequence is TTIMVVEQPK…KVTRLAAGLS (97 aa).

The protein belongs to the RecR family.

In terms of biological role, may play a role in DNA repair. It seems to be involved in an RecBC-independent recombinational process of DNA repair. It may act with RecF and RecO. This chain is Recombination protein RecR, found in Lactobacillus helveticus (strain DPC 4571).